The primary structure comprises 469 residues: D-3-phosphoglycerate dehydrogenase 1 (469 aa).

Residues S22, S29, and S33 each carry the phosphoserine modification. NAD(+)-binding positions include 208 to 209 (HI), D228, 285 to 287 (ASR), and D311. R287 is a catalytic residue. Residue E316 is part of the active site. The active-site Proton donor is the H347. Residue 347–350 (HIGG) coordinates NAD(+). Residues 399-469 (RVLYIHQNVP…SAKISIRLLY (71 aa)) form the ACT domain.

It belongs to the D-isomer specific 2-hydroxyacid dehydrogenase family.

The catalysed reaction is (2R)-3-phosphoglycerate + NAD(+) = 3-phosphooxypyruvate + NADH + H(+). It carries out the reaction (R)-2-hydroxyglutarate + NAD(+) = 2-oxoglutarate + NADH + H(+). The protein operates within amino-acid biosynthesis; L-serine biosynthesis; L-serine from 3-phospho-D-glycerate: step 1/3. Functionally, catalyzes the reversible oxidation of 3-phospho-D-glycerate to 3-phosphonooxypyruvate, the first step of the phosphorylated L-serine biosynthesis pathway. Also catalyzes the reversible oxidation of 2-hydroxyglutarate to 2-oxoglutarate. This Saccharomyces cerevisiae (strain ATCC 204508 / S288c) (Baker's yeast) protein is D-3-phosphoglycerate dehydrogenase 1 (SER3).